Reading from the N-terminus, the 860-residue chain is MYSGAGPALAPPAPPPPPIQGYAFKPPPRPDFGTSGRTIKLQANFFEMDIPKIDIYHYELDIKPEKCPRRVNREIVEHMVQHFKTQIFGDRKPVFDGRKNLYTAMPLPIGRDKVELEVTLPGEGKDRIFKVSIKWVSCVSLQALHDALSGRLPSVPFETIQALDVVMRHLPSMRYTPVGRSFFTASEGCSNPLGGGREVWFGFHQSVRPSLWKMMLNIDVSATAFYKAQPVIEFVCEVLDFKSIEEQQKPLTDSQRVKFTKEIKGLKVEITHCGQMKRKYRVCNVTRRPASHQTFPLQQESGQTVECTVAQYFKDRHKLVLRYPHLPCLQVGQEQKHTYLPLEVCNIVAGQRCIKKLTDNQTSTMIRATARSAPDRQEEISKLMRSASFNTDPYVREFGIMVKDEMTDVTGRVLQPPSILYGGRNKAIATPVQGVWDMRNKQFHTGIEIKVWAIACFAPQRQCTEVHLKSFTEQLRKISRDAGMPIQGQPCFCKYAQGADSVEPMFRHLKNTYAGLQLVVVILPGKTPVYAEVKRVGDTVLGMATQCVQMKNVQRTTPQTLSNLWLKINVKLGGVNNILLPQGRPPVFQQPVIFLGADVTHPPAGDGKKPSIAAVVGSMDAHPNRYCATVRVQQHRQEIIQDLAAMVRELLIQFYKSTRFKPTRIIFYRDGVSEGQFQQVLHHELLAIREACIKLEKDYQPGITFIVVQKRHHTRLFCTDKNERVGKSGNIPAGTTVDTKITHPTEFDFYLCSHAGIQGTSRPSHYHVLWDDNRFSSDELQILTYQLCHTYVRCTRSVSIPAPAYYAHLVAFRARYHLVDKEHDSAEGSHTSGQSNGRDHQALAKAVQVHQDTLRTMYFA.

The interval 1 to 30 (MYSGAGPALAPPAPPPPPIQGYAFKPPPRP) is disordered. Position 2 is a 3'-nitrotyrosine (Tyr-2). Residues 9-30 (LAPPAPPPPPIQGYAFKPPPRP) show a composition bias toward pro residues. In terms of domain architecture, PAZ spans 230–349 (PVIEFVCEVL…LPLEVCNIVA (120 aa)). The interaction with guide RNA stretch occupies residues 312–317 (YFKDRH). Position 388 is a phosphoserine (Ser-388). The region spanning 518 to 819 (LVVVILPGKT…VAFRARYHLV (302 aa)) is the Piwi domain. The tract at residues 525–567 (GKTPVYAEVKRVGDTVLGMATQCVQMKNVQRTTPQTLSNLWLK) is interaction with guide RNA. Residues 588-591 (FQQP) are interaction with GW182 family members. Asp-598 contributes to the a divalent metal cation binding site. The interval 651–661 (LIQFYKSTRFK) is interaction with GW182 family members. Asp-670 lines the a divalent metal cation pocket. 4-hydroxyproline is present on Pro-701. 3 interaction with guide RNA regions span residues 710–711 (KR), 754–762 (HAGIQGTSR), and 791–813 (YVRC…VAFR). His-808 serves as a coordination point for a divalent metal cation. Phosphoserine is present on residues Ser-825, Ser-829, Ser-832, and Ser-835.

It belongs to the argonaute family. Ago subfamily. As to quaternary structure, interacts with DICER1 through its Piwi domain and with TARBP2 during assembly of the RNA-induced silencing complex (RISC). Together, DICER1, AGO2 and TARBP2 constitute the trimeric RISC loading complex (RLC), or micro-RNA (miRNA) loading complex (miRLC). Within the RLC/miRLC, DICER1 and TARBP2 are required to process precursor miRNAs (pre-miRNAs) to mature miRNAs and then load them onto AGO2. AGO2 bound to the mature miRNA constitutes the minimal RISC and may subsequently dissociate from DICER1 and TARBP2. Note however that the term RISC has also been used to describe the trimeric RLC/miRLC. The formation of RISC complexes containing siRNAs rather than miRNAs appears to occur independently of DICER1. Interacts with AGO1. Also interacts with DDB1, DDX5, DDX6, DDX20, DHX30, DHX36, DDX47, DHX9, ELAVL, FXR1, GEMIN4, HNRNPF, IGF2BP1, ILF3, IMP8, MATR3, PABPC1, PRMT5, P4HA1, P4HB, RBM4, SART3, TNRC6A, TNRC6B, UPF1 and YBX1. Interacts with the P-body components DCP1A and XRN1. Associates with polysomes and messenger ribonucleoproteins (mNRPs). Interacts with RBM4; the interaction is modulated under stress-induced conditions, occurs under both cell proliferation and differentiation conditions and in an RNA- and phosphorylation-independent manner. Interacts with LIMD1, WTIP and AJUBA. Interacts with TRIM71; the interaction increases in presence of RNA. Interacts with APOBEC3G in an RNA-dependent manner. Interacts with APOBEC3A, APOBEC3C, APOBEC3F and APOBEC3H. Interacts with DICER1, TARBP2, EIF6, MOV10 and RPL7A (60S ribosome subunit); they form a large RNA-induced silencing complex (RISC). Interacts with FMR1. Interacts with ZFP36. Interacts with RC3H1; the interaction is RNA independent. Found in a complex composed of AGO2, CHD7 and ARB2A. Interacts with SND1 and SYT11. Interacts with CLNK. Interacts with GARRE1. Interacts with GRB2; this interaction is important for the formation of a ternary complex containing GRB2, AGO2 and DICER1. The cofactor is Mg(2+). Mn(2+) is required as a cofactor. In terms of processing, hydroxylated. 4-hydroxylation appears to enhance protein stability but is not required for miRNA-binding or endonuclease activity. Post-translationally, ubiquitinated on surface-exposed lysines by a SCF-like E3 ubiquitin-protein ligase complex containing ZSWIM8 during target-directed microRNA degradation (TDMD), a process that mediates degradation of microRNAs (miRNAs). Ubiquitination by the SCF-like E3 ubiquitin-protein ligase complex containing ZSWIM8 leads to its subsequent degradation, thereby exposing miRNAs for degradation. ZSWIM8 recognizes and binds AGO2 when it is engaged with a TDMD target. Phosphorylation at Ser-388 by AKT3; leads to up-regulate translational repression of microRNA target and down-regulate endonucleolytic cleavage. In terms of processing, a phosphorylation cycle of C-terminal serine cluster (Ser-825-Ser-835) regulates the release of target mRNAs. Target-binding leads to phosphorylation of these residues by CSNK1A1, which reduces the affinity of AGO2 for mRNA and enables target release. The ANKRD52-PPP6C phosphatase complex dephosphorylates the residues, which primes AGO2 for binding a new target.

The protein localises to the cytoplasm. It localises to the P-body. The protein resides in the nucleus. The enzyme catalyses Endonucleolytic cleavage to 5'-phosphomonoester.. Its function is as follows. Required for RNA-mediated gene silencing (RNAi) by the RNA-induced silencing complex (RISC). The 'minimal RISC' appears to include AGO2 bound to a short guide RNA such as a microRNA (miRNA) or short interfering RNA (siRNA). These guide RNAs direct RISC to complementary mRNAs that are targets for RISC-mediated gene silencing. The precise mechanism of gene silencing depends on the degree of complementarity between the miRNA or siRNA and its target. Binding of RISC to a perfectly complementary mRNA generally results in silencing due to endonucleolytic cleavage of the mRNA specifically by AGO2. Binding of RISC to a partially complementary mRNA results in silencing through inhibition of translation, and this is independent of endonuclease activity. May inhibit translation initiation by binding to the 7-methylguanosine cap, thereby preventing the recruitment of the translation initiation factor eIF4-E. May also inhibit translation initiation via interaction with EIF6, which itself binds to the 60S ribosomal subunit and prevents its association with the 40S ribosomal subunit. The inhibition of translational initiation leads to the accumulation of the affected mRNA in cytoplasmic processing bodies (P-bodies), where mRNA degradation may subsequently occur. In some cases RISC-mediated translational repression is also observed for miRNAs that perfectly match the 3' untranslated region (3'-UTR). Can also up-regulate the translation of specific mRNAs under certain growth conditions. Binds to the AU element of the 3'-UTR of the TNF (TNF-alpha) mRNA and up-regulates translation under conditions of serum starvation. Also required for transcriptional gene silencing (TGS), in which short RNAs known as antigene RNAs or agRNAs direct the transcriptional repression of complementary promoter regions. This Bos taurus (Bovine) protein is Protein argonaute-2 (AGO2).